The chain runs to 217 residues: Elongation factor Ts (217 aa).

Positions 82–85 (TDFV) are involved in Mg(2+) ion dislocation from EF-Tu.

Belongs to the EF-Ts family.

The protein localises to the cytoplasm. Functionally, associates with the EF-Tu.GDP complex and induces the exchange of GDP to GTP. It remains bound to the aminoacyl-tRNA.EF-Tu.GTP complex up to the GTP hydrolysis stage on the ribosome. The polypeptide is Elongation factor Ts (Desulfitobacterium hafniense (strain DSM 10664 / DCB-2)).